A 95-amino-acid chain; its full sequence is Co-chaperonin GroES (95 aa).

Belongs to the GroES chaperonin family. In terms of assembly, heptamer of 7 subunits arranged in a ring. Interacts with the chaperonin GroEL.

It is found in the cytoplasm. Together with the chaperonin GroEL, plays an essential role in assisting protein folding. The GroEL-GroES system forms a nano-cage that allows encapsulation of the non-native substrate proteins and provides a physical environment optimized to promote and accelerate protein folding. GroES binds to the apical surface of the GroEL ring, thereby capping the opening of the GroEL channel. In Ruegeria sp. (strain TM1040) (Silicibacter sp.), this protein is Co-chaperonin GroES.